The primary structure comprises 324 residues: Beta-ketoacyl-[acyl-carrier-protein] synthase III (324 aa).

Residues C112 and H251 contribute to the active site. Residues 252-256 form an ACP-binding region; it reads QANIR. N281 is an active-site residue.

Belongs to the thiolase-like superfamily. FabH family. As to quaternary structure, homodimer.

The protein localises to the cytoplasm. The enzyme catalyses malonyl-[ACP] + acetyl-CoA + H(+) = 3-oxobutanoyl-[ACP] + CO2 + CoA. It participates in lipid metabolism; fatty acid biosynthesis. In terms of biological role, catalyzes the condensation reaction of fatty acid synthesis by the addition to an acyl acceptor of two carbons from malonyl-ACP. Catalyzes the first condensation reaction which initiates fatty acid synthesis and may therefore play a role in governing the total rate of fatty acid production. Possesses both acetoacetyl-ACP synthase and acetyl transacylase activities. Its substrate specificity determines the biosynthesis of branched-chain and/or straight-chain of fatty acids. The protein is Beta-ketoacyl-[acyl-carrier-protein] synthase III of Desulfotalea psychrophila (strain LSv54 / DSM 12343).